The chain runs to 1216 residues: Apical endosomal glycoprotein (1216 aa).

The first 22 residues, 1–22 (MPLSSHLLPALVLFLAGSSGWA), serve as a signal peptide directing secretion. At 23-1151 (WVPNHCRSPG…SPGNTAAPGS (1129 aa)) the chain is on the extracellular side. Residues 26–53 (NHCRSPGQAVCNFVCDCRDCSDEAQCGY) enclose the LDL-receptor class A 1; truncated domain. In terms of domain architecture, MAM 1 spans 64–222 (FACDFEQDPC…DDLEFWDCGL (159 aa)). A glycan (N-linked (GlcNAc...) asparagine) is linked at N203. One can recognise an LDL-receptor class A 2 domain in the interval 228 to 266 (NCPPGHHHCQNKVCVEPQQLCDGEDNCGDLSDENPLTCG). Intrachain disulfides connect C229–C241, C236–C254, and C248–C265. Positions 269 to 425 (IATDFETGLG…DLILSDHCRP (157 aa)) constitute an MAM 2 domain. Residues 280–307 (WNRSEGWSRNHRAGGPERPSWPRRDHSR) form a disordered region. Residues N281 and N339 are each glycosylated (N-linked (GlcNAc...) asparagine). Positions 429 to 455 (VSTLQPLPPGPRAPAPQPLPPSSRLQD) are disordered. The segment covering 434 to 449 (PLPPGPRAPAPQPLPP) has biased composition (pro residues). The LDL-receptor class A 3 domain occupies 456-491 (SCKQGHLACGDLCVPPEQLCDFEEQCAGGEDEQACG). Cystine bridges form between C457-C468, C464-C481, and C475-C490. MAM domains lie at 491 to 644 (GTTD…DCSP), 654 to 809 (VSCN…PCWA), 811 to 969 (NYCS…PCPQ), and 971 to 1138 (GSCD…HCQQ). 2 N-linked (GlcNAc...) asparagine glycosylation sites follow: N583 and N636. An N-linked (GlcNAc...) asparagine glycan is attached at N835. Residues 1152–1172 (VPAVVGSALLLLMLLVLLGLG) form a helical membrane-spanning segment. At 1173–1216 (GRRWLQKKGSCPFQSNTEATAPGFDNILFNADGVTLPASVTSDP) the chain is on the cytoplasmic side.

It localises to the membrane. Its function is as follows. Probably involved in the sorting and selective transport of receptors and ligands across polarized epithelia. The protein is Apical endosomal glycoprotein of Homo sapiens (Human).